We begin with the raw amino-acid sequence, 361 residues long: DNA replication and repair protein RecF (361 aa).

30 to 37 (GDNAQGKT) contributes to the ATP binding site.

Belongs to the RecF family.

Its subcellular location is the cytoplasm. Its function is as follows. The RecF protein is involved in DNA metabolism; it is required for DNA replication and normal SOS inducibility. RecF binds preferentially to single-stranded, linear DNA. It also seems to bind ATP. This is DNA replication and repair protein RecF from Clostridium botulinum (strain Alaska E43 / Type E3).